We begin with the raw amino-acid sequence, 61 residues long: Beta-defensin 13 (61 aa).

Positions 1–21 are cleaved as a signal peptide; that stretch reads MRLLYLLFAAVMLLFLQAVPA. 8 residues coordinate a 1,2-diacyl-sn-glycero-3-phosphate: S24, R40, H44, N51, N53, G54, H58, and K61. Disulfide bonds link C31–C59, C38–C52, and C42–C60.

The protein belongs to the beta-defensin family. As to quaternary structure, monomeric. Forms multimeric, probably including tetrameric, complexes in the presence of phospholipid phosphatidic acid.

The protein localises to the secreted. Functionally, exhibits antimicrobial activity against fungi. Antimicrobial activity in a pH-dependent manner against the yeast C.albicans; activity is salt tolerant and retains antifungal activity in NaCl concentrations of 100mM. Permeabilizes C.albicans cell membranes via targeting plasma membrane phospholipid phosphatidic acid. This chain is Beta-defensin 13, found in Crocodylus porosus (Saltwater crocodile).